The chain runs to 354 residues: Glutamine synthetase (354 aa).

Residues 22 to 101 (IQAEYVWIDG…VLAETYNNDG (80 aa)) enclose the GS beta-grasp domain. The 247-residue stretch at 108 to 354 (HRHHAKKVFD…IIAETTILDK (247 aa)) folds into the GS catalytic domain.

It belongs to the glutamine synthetase family. Homooctamer.

It localises to the cytoplasm. The catalysed reaction is L-glutamate + NH4(+) + ATP = L-glutamine + ADP + phosphate + H(+). The chain is Glutamine synthetase (glnA) from Agaricus bisporus (White button mushroom).